Consider the following 65-residue polypeptide: Hirudin-2 (65 aa).

Residues 1–3 (ITY) are interaction with thrombin active site. Disulfide bonds link C6/C14, C16/C28, and C22/C39. Positions 39-65 (CVTGEGTPKPQSHNDGDFEEIPEEYLQ) are disordered. Residue T45 is glycosylated (O-linked (GalNAc...) threonine). The tract at residues 55 to 65 (DFEEIPEEYLQ) is interaction with fibrinogen-binding exosite of thrombin. Acidic residues predominate over residues 55–65 (DFEEIPEEYLQ). Y63 bears the Sulfotyrosine mark.

This sequence belongs to the protease inhibitor I14 (hirudin) family.

It is found in the secreted. Its function is as follows. Hirudin is a potent thrombin-specific protease inhibitor. It forms a stable non-covalent complex with alpha-thrombin, thereby abolishing its ability to cleave fibrinogen. The protein is Hirudin-2 of Hirudo medicinalis (Medicinal leech).